A 396-amino-acid polypeptide reads, in one-letter code: Elongation factor Tu (396 aa).

The tr-type G domain occupies lysine 10–glutamate 206. Residues glycine 19–threonine 26 form a G1 region. A GTP-binding site is contributed by glycine 19–threonine 26. Residue threonine 26 coordinates Mg(2+). Positions glycine 60 to alanine 64 are G2. The interval aspartate 81–glycine 84 is G3. Residues aspartate 81–histidine 85 and asparagine 136–aspartate 139 contribute to the GTP site. The tract at residues asparagine 136–aspartate 139 is G4. A G5 region spans residues serine 174–leucine 176.

The protein belongs to the TRAFAC class translation factor GTPase superfamily. Classic translation factor GTPase family. EF-Tu/EF-1A subfamily. Monomer.

It localises to the cytoplasm. It catalyses the reaction GTP + H2O = GDP + phosphate + H(+). Functionally, GTP hydrolase that promotes the GTP-dependent binding of aminoacyl-tRNA to the A-site of ribosomes during protein biosynthesis. The polypeptide is Elongation factor Tu (Methylococcus capsulatus (strain ATCC 33009 / NCIMB 11132 / Bath)).